We begin with the raw amino-acid sequence, 178 residues long: Translation initiation factor IF-3 (178 aa).

This sequence belongs to the IF-3 family. In terms of assembly, monomer.

The protein resides in the cytoplasm. Functionally, IF-3 binds to the 30S ribosomal subunit and shifts the equilibrium between 70S ribosomes and their 50S and 30S subunits in favor of the free subunits, thus enhancing the availability of 30S subunits on which protein synthesis initiation begins. In Picosynechococcus sp. (strain ATCC 27264 / PCC 7002 / PR-6) (Agmenellum quadruplicatum), this protein is Translation initiation factor IF-3.